The sequence spans 110 residues: BolA-like protein 3 (110 aa).

It belongs to the BolA/IbaG family. In terms of assembly, interacts with NFU1.

Its subcellular location is the mitochondrion. Its function is as follows. Acts as a mitochondrial iron-sulfur (Fe-S) cluster assembly factor that facilitates (Fe-S) cluster insertion into a subset of mitochondrial proteins. Probably acts together with NFU1. This Mus musculus (Mouse) protein is BolA-like protein 3 (Bola3).